We begin with the raw amino-acid sequence, 482 residues long: E3 ubiquitin-protein ligase makorin-1 (482 aa).

The segment covering 26 to 38 (ASPTPIPTVTAPS) has biased composition (low complexity). A disordered region spans residues 26 to 52 (ASPTPIPTVTAPSLGAGGGGGGSDGSG). Positions 40–52 (GAGGGGGGSDGSG) are enriched in gly residues. 3 consecutive C3H1-type zinc fingers follow at residues 55-82 (WTKQ…HDLS), 84-111 (SPYS…HSKP), and 208-235 (ETKK…HGDS). The makorin-type Cys-His stretch occupies residues 236 to 263 (CDMCGLQVLHPMDAAQRSQHIKSCIEAH). The segment at 281–335 (CGICMEVVYEKANPSERRFGILSNCNHTYCLKCIRKWRSAKQFESKIIKSCPECR) adopts an RING-type zinc-finger fold. A C3H1-type 4 zinc finger spans residues 364-393 (AMSNKACRYFDEGRGSCPFGGNCFYKHAYP).

In terms of assembly, interacts with p53/TP53 and CDKN1A. Interacts with TERT, modulating telomere length homeostasis. Post-translationally, auto-ubiquitinated; which leads to proteasomal degradation. Ubiquitous.

The enzyme catalyses S-ubiquitinyl-[E2 ubiquitin-conjugating enzyme]-L-cysteine + [acceptor protein]-L-lysine = [E2 ubiquitin-conjugating enzyme]-L-cysteine + N(6)-ubiquitinyl-[acceptor protein]-L-lysine.. It functions in the pathway protein modification; protein ubiquitination. Functionally, E3 ubiquitin ligase catalyzing the covalent attachment of ubiquitin moieties onto substrate proteins. These substrates include FILIP1, p53/TP53, CDKN1A and TERT. Keeps cells alive by suppressing p53/TP53 under normal conditions, but stimulates apoptosis by repressing CDKN1A under stress conditions. Acts as a negative regulator of telomerase. Has negative and positive effects on RNA polymerase II-dependent transcription. The chain is E3 ubiquitin-protein ligase makorin-1 (MKRN1) from Homo sapiens (Human).